A 434-amino-acid polypeptide reads, in one-letter code: Beta-enolase (434 aa).

Residue A2 is modified to N-acetylalanine. T72 carries the post-translational modification Phosphothreonine. Phosphoserine occurs at positions 83 and 157. Positions 158 and 167 each coordinate substrate. S176 is subject to Phosphoserine. T205 is subject to Phosphothreonine. E210 (proton donor) is an active-site residue. Position 229 is a phosphothreonine (T229). Y236 carries the post-translational modification Phosphotyrosine. Mg(2+) is bound at residue D245. The residue at position 263 (S263) is a Phosphoserine. Residues E293 and D318 each contribute to the substrate site. Mg(2+)-binding residues include E293 and D318. K343 acts as the Proton acceptor in catalysis. Substrate is bound by residues 370–373 (SHRS) and K394.

Belongs to the enolase family. In terms of assembly, mammalian enolase is composed of 3 isozyme subunits, alpha, beta and gamma, which can form homodimers or heterodimers which are cell-type and development-specific. Interacts with PNKD. Mg(2+) serves as cofactor. In terms of tissue distribution, the alpha/alpha homodimer is expressed in embryo and in most adult tissues. The alpha/beta heterodimer and the beta/beta homodimer are found in striated muscle, and the alpha/gamma heterodimer and the gamma/gamma homodimer in neurons.

Its subcellular location is the cytoplasm. It catalyses the reaction (2R)-2-phosphoglycerate = phosphoenolpyruvate + H2O. Its pathway is carbohydrate degradation; glycolysis; pyruvate from D-glyceraldehyde 3-phosphate: step 4/5. In terms of biological role, glycolytic enzyme that catalyzes the conversion of 2-phosphoglycerate to phosphoenolpyruvate. Appears to have a function in striated muscle development and regeneration. The chain is Beta-enolase (ENO3) from Homo sapiens (Human).